The following is a 95-amino-acid chain: uncharacterized protein (95 aa).

Positions 1 to 21 (MKVLSISLIFFALLLTGCSQV) are cleaved as a signal peptide.

This is an uncharacterized protein from Archaeoglobus fulgidus (strain ATCC 49558 / DSM 4304 / JCM 9628 / NBRC 100126 / VC-16).